The primary structure comprises 379 residues: cAMP-dependent protein kinase type I-alpha regulatory subunit (379 aa).

At M1 the chain carries N-acetylmethionine. The dimerization and phosphorylation stretch occupies residues 1–134; the sequence is MASSSTSSEE…ALAKAIEKNV (134 aa). Residues 63–93 are disordered; it reads QMVSQQKSSSRSDSREDEVSPPMNPVVKGRR. The Pseudophosphorylation motif signature appears at 94–98; it reads RRGAI. 3',5'-cyclic AMP is bound by residues 135 to 252, E200, R209, 253 to 379, E324, and R333; these read LFAH…SKVS and ILES…SLSV.

The protein belongs to the cAMP-dependent kinase regulatory chain family. As to quaternary structure, the inactive holoenzyme is composed of two regulatory chains and two catalytic chains. Activation by cAMP releases the two active catalytic monomers and the regulatory dimer. Interacts with PRKACA and PRKACB. Interacts with PRRC1; resulting in PKA activation. Post-translationally, the pseudophosphorylation site binds to the substrate-binding region of the catalytic chain, resulting in the inhibition of its activity.

The protein resides in the cell membrane. In terms of biological role, regulatory subunit of the cAMP-dependent protein kinases involved in cAMP signaling in cells. In Danio rerio (Zebrafish), this protein is cAMP-dependent protein kinase type I-alpha regulatory subunit (prkar1aa).